The following is an 81-amino-acid chain: Small ribosomal subunit protein bS18 (81 aa).

Belongs to the bacterial ribosomal protein bS18 family. In terms of assembly, part of the 30S ribosomal subunit. Forms a tight heterodimer with protein bS6.

Its function is as follows. Binds as a heterodimer with protein bS6 to the central domain of the 16S rRNA, where it helps stabilize the platform of the 30S subunit. The polypeptide is Small ribosomal subunit protein bS18 (Chlamydia trachomatis serovar L2 (strain ATCC VR-902B / DSM 19102 / 434/Bu)).